The chain runs to 1461 residues: Potassium channel K2 (1461 aa).

A run of 6 helical transmembrane segments spans residues 44-64 (IIEG…LIYI), 142-162 (FNYY…YISL), 183-203 (IYNM…MVII), 218-238 (LIDI…IFVF), 242-262 (IDIY…NVSY), and 281-301 (IVLG…TIQA). Positions 322–340 (YFYFSIISISTVGYGDIFP) form an intramembrane region, pore-forming. The chain crosses the membrane as a helical span at residues 349 to 369 (CIIFIFWTFIWVPIQFNDLII). Residues 771 to 794 (KRDDFDNNNNNNNNNIVKSRKKGR) form a disordered region.

In terms of assembly, may form oligomers or interact with other proteins.

The protein localises to the membrane. Its function is as follows. Contributes to transmembrane potassium transport. The sequence is that of Potassium channel K2 from Plasmodium falciparum (isolate 3D7).